The chain runs to 92 residues: Promotilin (92 aa).

Residues 12–49 (RMQEKERNRGQKKSLGLQQRSEEVGSLDPTEAAEEEGK) form a disordered region.

The protein belongs to the motilin family.

Its subcellular location is the secreted. Functionally, plays an important role in the regulation of interdigestive gastrointestinal motility and indirectly causes rhythmic contraction of duodenal and colonic smooth muscle. The sequence is that of Promotilin (MLN) from Equus caballus (Horse).